Consider the following 186-residue polypeptide: Riboflavin kinase (186 aa).

Threonine 42 and asparagine 44 together coordinate Mg(2+). Glutamate 123 functions as the Nucleophile in the catalytic mechanism.

Belongs to the flavokinase family. It depends on Zn(2+) as a cofactor. Requires Mg(2+) as cofactor.

The catalysed reaction is riboflavin + ATP = FMN + ADP + H(+). Its pathway is cofactor biosynthesis; FMN biosynthesis; FMN from riboflavin (ATP route): step 1/1. In terms of biological role, catalyzes the phosphorylation of riboflavin (vitamin B2) to form flavin mononucleotide (FMN) coenzyme. The polypeptide is Riboflavin kinase (FMN1) (Eremothecium gossypii (strain ATCC 10895 / CBS 109.51 / FGSC 9923 / NRRL Y-1056) (Yeast)).